A 91-amino-acid polypeptide reads, in one-letter code: Small ribosomal subunit protein uS19 (91 aa).

Belongs to the universal ribosomal protein uS19 family.

Functionally, protein S19 forms a complex with S13 that binds strongly to the 16S ribosomal RNA. The sequence is that of Small ribosomal subunit protein uS19 from Psychrobacter arcticus (strain DSM 17307 / VKM B-2377 / 273-4).